A 353-amino-acid chain; its full sequence is Photosystem II protein D1 (353 aa).

Thr-2 is subject to N-acetylthreonine. Thr-2 is subject to Phosphothreonine. A run of 3 helical transmembrane segments spans residues 29 to 46, 118 to 133, and 142 to 156; these read YIGWFGVLMIPLLLTATS, HFLLGVACYMGREWEL, and WIAVAYSAPVAAATA. His-118 is a binding site for chlorophyll a. Residue Tyr-126 participates in pheophytin a binding. Residues Asp-170 and Glu-189 each contribute to the [CaMn4O5] cluster site. A helical membrane pass occupies residues 197-218; sequence FHMLGVAGVFGGSLFSAMHGSL. Residue His-198 participates in chlorophyll a binding. Residues His-215 and 264 to 265 contribute to the a quinone site; that span reads SF. Fe cation is bound at residue His-215. His-272 contacts Fe cation. A helical transmembrane segment spans residues 274–288; it reads FLAAWPVVCIWFTAL. Residues His-332, Glu-333, Asp-342, and Ala-344 each contribute to the [CaMn4O5] cluster site. A propeptide spanning residues 345 to 353 is cleaved from the precursor; that stretch reads SVDAPAVQG.

This sequence belongs to the reaction center PufL/M/PsbA/D family. As to quaternary structure, PSII is composed of 1 copy each of membrane proteins PsbA, PsbB, PsbC, PsbD, PsbE, PsbF, PsbH, PsbI, PsbJ, PsbK, PsbL, PsbM, PsbT, PsbX, PsbY, PsbZ, Psb30/Ycf12, at least 3 peripheral proteins of the oxygen-evolving complex and a large number of cofactors. It forms dimeric complexes. It depends on The D1/D2 heterodimer binds P680, chlorophylls that are the primary electron donor of PSII, and subsequent electron acceptors. It shares a non-heme iron and each subunit binds pheophytin, quinone, additional chlorophylls, carotenoids and lipids. D1 provides most of the ligands for the Mn4-Ca-O5 cluster of the oxygen-evolving complex (OEC). There is also a Cl(-1) ion associated with D1 and D2, which is required for oxygen evolution. The PSII complex binds additional chlorophylls, carotenoids and specific lipids. as a cofactor. In terms of processing, tyr-161 forms a radical intermediate that is referred to as redox-active TyrZ, YZ or Y-Z. Post-translationally, C-terminally processed by CTPA; processing is essential to allow assembly of the oxygen-evolving complex and thus photosynthetic growth.

The protein localises to the plastid. The protein resides in the chloroplast thylakoid membrane. It carries out the reaction 2 a plastoquinone + 4 hnu + 2 H2O = 2 a plastoquinol + O2. Its function is as follows. Photosystem II (PSII) is a light-driven water:plastoquinone oxidoreductase that uses light energy to abstract electrons from H(2)O, generating O(2) and a proton gradient subsequently used for ATP formation. It consists of a core antenna complex that captures photons, and an electron transfer chain that converts photonic excitation into a charge separation. The D1/D2 (PsbA/PsbD) reaction center heterodimer binds P680, the primary electron donor of PSII as well as several subsequent electron acceptors. This is Photosystem II protein D1 from Nephroselmis olivacea (Green alga).